A 250-amino-acid polypeptide reads, in one-letter code: Cell division protein ZapD (250 aa).

Belongs to the ZapD family. As to quaternary structure, interacts with FtsZ.

It localises to the cytoplasm. Its function is as follows. Cell division factor that enhances FtsZ-ring assembly. Directly interacts with FtsZ and promotes bundling of FtsZ protofilaments, with a reduction in FtsZ GTPase activity. This is Cell division protein ZapD from Yersinia pseudotuberculosis serotype O:1b (strain IP 31758).